Here is a 348-residue protein sequence, read N- to C-terminus: tRNA N6-adenosine threonylcarbamoyltransferase (348 aa).

Positions 114 and 118 each coordinate Fe cation. Substrate contacts are provided by residues leucine 137–glycine 141, aspartate 171, glycine 184, aspartate 188, and asparagine 283. Fe cation is bound at residue aspartate 311.

This sequence belongs to the KAE1 / TsaD family. Requires Fe(2+) as cofactor.

The protein localises to the cytoplasm. It catalyses the reaction L-threonylcarbamoyladenylate + adenosine(37) in tRNA = N(6)-L-threonylcarbamoyladenosine(37) in tRNA + AMP + H(+). In terms of biological role, required for the formation of a threonylcarbamoyl group on adenosine at position 37 (t(6)A37) in tRNAs that read codons beginning with adenine. Is involved in the transfer of the threonylcarbamoyl moiety of threonylcarbamoyl-AMP (TC-AMP) to the N6 group of A37, together with TsaE and TsaB. TsaD likely plays a direct catalytic role in this reaction. The sequence is that of tRNA N6-adenosine threonylcarbamoyltransferase from Nocardioides sp. (strain ATCC BAA-499 / JS614).